Consider the following 271-residue polypeptide: Probable ribosomal RNA small subunit methyltransferase A (271 aa).

S-adenosyl-L-methionine-binding residues include L12, G37, E58, D83, and N100.

It belongs to the class I-like SAM-binding methyltransferase superfamily. rRNA adenine N(6)-methyltransferase family. RsmA subfamily.

It localises to the cytoplasm. Functionally, specifically dimethylates two adjacent adenosines in the loop of a conserved hairpin near the 3'-end of 16S rRNA in the 30S particle. May play a critical role in biogenesis of 30S subunits. The sequence is that of Probable ribosomal RNA small subunit methyltransferase A from Methanococcus aeolicus (strain ATCC BAA-1280 / DSM 17508 / OCM 812 / Nankai-3).